We begin with the raw amino-acid sequence, 366 residues long: MKVLAAMSGGVDSAVAAARLVEAGHDVTGVHLALSRNPRSHREGSRGCCSLEDSFDARRAADRLGIPFYVWDFSDRFVAEVIDPFIAEYRAGRTPNPCLRCNERIKFAALLERGLDLGYDAVATGHYARTKVVDGVTKLYRSVDPGKDQSYVLAVLNQDQLSHSLFPLGNSLKMNVRQEAAALGLSVADKPDSNDICFIPDGDTPGWLSEKIGSADGEIRDESGALVGHHNGYHHFTIGQRRGLRLGVPAPDGKPRYVLDIEPVNNTVVVGGAEGLTVHHIEAIRPVWCSSEPVETWHGQAQVRAHGDPVPAIISAVPGGVAVELEDSLRGVAPGQAAVFYDGDLVVGSATICGTDRAGVKAEQAA.

Residues 6 to 13 and Leu32 contribute to the ATP site; that span reads AMSGGVDS. The active-site Nucleophile is Cys101. A disulfide bridge connects residues Cys101 and Cys197. Gly125 serves as a coordination point for ATP. An interaction with tRNA region spans residues 147–149; the sequence is KDQ. Cys197 functions as the Cysteine persulfide intermediate in the catalytic mechanism.

Belongs to the MnmA/TRMU family.

Its subcellular location is the cytoplasm. It carries out the reaction S-sulfanyl-L-cysteinyl-[protein] + uridine(34) in tRNA + AH2 + ATP = 2-thiouridine(34) in tRNA + L-cysteinyl-[protein] + A + AMP + diphosphate + H(+). Catalyzes the 2-thiolation of uridine at the wobble position (U34) of tRNA, leading to the formation of s(2)U34. The protein is tRNA-specific 2-thiouridylase MnmA of Cutibacterium acnes (strain DSM 16379 / KPA171202) (Propionibacterium acnes).